An 80-amino-acid polypeptide reads, in one-letter code: Bowman-Birk type proteinase inhibitor DE-4 (80 aa).

Positions 1–10 are enriched in acidic residues; it reads DDDHSDDEPR. A disordered region spans residues 1-29; the sequence is DDDHSDDEPRESESSKPCCSSCCTRSRPP. Residues 15–29 show a composition bias toward low complexity; that stretch reads SKPCCSSCCTRSRPP. Cystine bridges form between Cys-18-Cys-71, Cys-19-Cys-33, Cys-22-Cys-67, Cys-23-Cys-31, Cys-41-Cys-48, Cys-45-Cys-60, and Cys-50-Cys-58.

The protein belongs to the Bowman-Birk serine protease inhibitor family.

The chain is Bowman-Birk type proteinase inhibitor DE-4 from Philenoptera violacea (Apple-leaf).